A 298-amino-acid chain; its full sequence is Acetylglutamate kinase (298 aa).

Residues 69–70 (GG), arginine 91, and asparagine 196 contribute to the substrate site.

This sequence belongs to the acetylglutamate kinase family. ArgB subfamily.

The protein resides in the cytoplasm. It carries out the reaction N-acetyl-L-glutamate + ATP = N-acetyl-L-glutamyl 5-phosphate + ADP. The protein operates within amino-acid biosynthesis; L-arginine biosynthesis; N(2)-acetyl-L-ornithine from L-glutamate: step 2/4. In terms of biological role, catalyzes the ATP-dependent phosphorylation of N-acetyl-L-glutamate. The chain is Acetylglutamate kinase from Rhodopseudomonas palustris (strain BisA53).